The following is a 90-amino-acid chain: [Phe8]-phyllolitorin (90 aa).

An N-terminal signal peptide occupies residues 1-30 (MSAVPFTRVLLISGFLAHLLLSTFVTLTVC). Residues 31 to 48 (KEVTEESDDLSKRNVLQR) constitute a propeptide that is removed on maturation. Q49 bears the Pyrrolidone carboxylic acid mark. M57 is modified (methionine amide). Residues 61 to 90 (SLENTNRRSDEDMEISALFRGSPLKVKRSD) constitute a propeptide that is removed on maturation.

This sequence belongs to the bombesin/neuromedin-B/ranatensin family. Expressed by the skin glands.

It localises to the secreted. This chain is [Phe8]-phyllolitorin, found in Phyllomedusa sauvagei (Sauvage's leaf frog).